We begin with the raw amino-acid sequence, 374 residues long: Ribosomal RNA large subunit methyltransferase G (374 aa).

It belongs to the methyltransferase superfamily. RlmG family.

The protein resides in the cytoplasm. The enzyme catalyses guanosine(1835) in 23S rRNA + S-adenosyl-L-methionine = N(2)-methylguanosine(1835) in 23S rRNA + S-adenosyl-L-homocysteine + H(+). In terms of biological role, specifically methylates the guanine in position 1835 (m2G1835) of 23S rRNA. In Photobacterium profundum (strain SS9), this protein is Ribosomal RNA large subunit methyltransferase G.